A 228-amino-acid chain; its full sequence is Large ribosomal subunit protein bL25 (228 aa).

The segment at 198–228 (AAIAEAQSAEAAEEKAEAEAEATNEKNDTEE) is disordered. A compositionally biased stretch (basic and acidic residues) spans 209–228 (AEEKAEAEAEATNEKNDTEE).

The protein belongs to the bacterial ribosomal protein bL25 family. CTC subfamily. In terms of assembly, part of the 50S ribosomal subunit; part of the 5S rRNA/L5/L18/L25 subcomplex. Contacts the 5S rRNA. Binds to the 5S rRNA independently of L5 and L18.

Functionally, this is one of the proteins that binds to the 5S RNA in the ribosome where it forms part of the central protuberance. The chain is Large ribosomal subunit protein bL25 from Methylorubrum populi (strain ATCC BAA-705 / NCIMB 13946 / BJ001) (Methylobacterium populi).